Reading from the N-terminus, the 676-residue chain is ATP-dependent zinc metalloprotease FtsH (676 aa).

Residues 1–12 lie on the Cytoplasmic side of the membrane; it reads MSFFDKIFKKFH. The chain crosses the membrane as a helical span at residues 13–33; sequence MGVLYFAVILIGATFIYCYFT. Residues 34-115 are Extracellular-facing; sequence KHEKKDNNTF…DPRPWNGYEH (82 aa). Residues 116 to 136 traverse the membrane as a helical segment; that stretch reads VFWVFRQCLTMLFFYCFFLFF. The Cytoplasmic portion of the chain corresponds to 137–676; the sequence is ADTIKQMGQE…EVLSTDSEQT (540 aa). An ATP-binding site is contributed by 212–219; sequence GPPGTGKT. Histidine 433 contributes to the Zn(2+) binding site. Glutamate 434 is an active-site residue. Positions 437 and 509 each coordinate Zn(2+). Residues 610 to 676 are disordered; sequence EKEETNAPTQ…EVLSTDSEQT (67 aa). Residues 615 to 636 show a composition bias toward polar residues; that stretch reads NAPTQTTSQMSSNNETTNTDKT. Residues 650–667 are compositionally biased toward low complexity; it reads NQESNESNPNNNEKASPE.

The protein in the central section; belongs to the AAA ATPase family. This sequence in the C-terminal section; belongs to the peptidase M41 family. Homohexamer. It depends on Zn(2+) as a cofactor.

Its subcellular location is the cell membrane. Acts as a processive, ATP-dependent zinc metallopeptidase for both cytoplasmic and membrane proteins. Plays a role in the quality control of integral membrane proteins. This chain is ATP-dependent zinc metalloprotease FtsH, found in Aster yellows witches'-broom phytoplasma (strain AYWB).